The sequence spans 1342 residues: MAYSYSEKKRIRKSFGKRSQVLNVPYLLTIQLDSFDKFIQRDPEGLQGLEAAFRSVFPIVSSNGATELQYVSYELGEPVFDVRECQIRGTTYAAPLRVKLRLVTFDREAAAGTVKDIKEQNVYMGEIPLMTDNGTFVINGTERVIVSQLHRSPGVFFDSDKGKTHASGKVLYNARIIPYRGSWLDFEFDPKDNLYARIDRRRKLPATIILRALGYTTEEILNMFFETATFHIEDNRLLMTLVPERLRGETAAFDIEANGKIYVESGRRITARHIRALEKDNITQIQVPTEYIVGRVTARDYVDLSTGEIVCPANSEIGLETLAALAQAGYNEIEVLFTNDLDYGPYISETLRIDPTYDRLSALVEIYRMMRPGEPPTKEAAEALFDNMFFSTDRYDLSAVGRMKFNRSLDIPEGVGTGILSNDDIIGVMKKLIEIRNGRGEVDDIDHLGNRRIRSVGEMAENQFRIGLVRVERAVRERLSLGDLDGVTPQDLINAKPISAAVKEFFGSSQLSQFMDQNNPLSEVTHKRRISALGSGGLTRERAGFEVRDVHTTHYGRLCPIETPEGPNIGLINSLSVYARTNNYGFLETPFRKVVNGQVTEEIEYLSAIEEGAYVIAQANSNLDENFRFTDTYVTCRGEHGESGLYRPEEIHYMDVSTQQVVSVAAALIPFLEHDDANRALMGANMQRQAVPTLRADKPLVGTGMEKPIALDSGVAVIAKRGGTIQYVDASRIVVKVNEDETVAGEAGIDIYNLIKYTRSNQNTCINQIPCVKLGEPVGRGEILADGPSTDLGELALGQNIRVAFMPWNGYNFEDSMLVSERVVQEDRFTTIHIQELSCVARDTKLGAEEITADIPNVGESALSKLDESGIVYIGAEVKGGDILVGKVTPKGETQLIPEEKLLRAIFGEKASDVKDSSLRVPNGTSGTVIDVQVFTRDGVEKDKRAKDIEEIQLREAKKDLTEELEILEAGLFTRVRNLLLEGGVAQATLDNLAREKWLEQTLDDEAKQNQLEQLAEQHEELRKEFERKLEIKRNKIIQGDDLAPGVLKVVKVYLAVKRQIQPGDKMAGRHGNKGVISKINPVEDMPYDENGQPVEIVLNPLGVPSRMNIGQILETHLGLAARGIGDQIDKMIKQQQEIAKLREYIQKAYDLGHGAQSVDLSTFSDEEVMRLAQNLRKGLPLATPVFDGAHESEIKGLLELGGLPTSGQITLYDGRTGEKFERLVTVGYMYMLKLNHLVDDKMHARSTGSYSLVTQQPLGGKAQLGGQRFGEMEVWALEAYGAAYTLQEMLTVKSDDVNGRTKMYKNIVDGTHYMEPGIPESFNVITKEIRALAIDMELDEA.

The protein belongs to the RNA polymerase beta chain family. As to quaternary structure, the RNAP catalytic core consists of 2 alpha, 1 beta, 1 beta' and 1 omega subunit. When a sigma factor is associated with the core the holoenzyme is formed, which can initiate transcription.

The enzyme catalyses RNA(n) + a ribonucleoside 5'-triphosphate = RNA(n+1) + diphosphate. Functionally, DNA-dependent RNA polymerase catalyzes the transcription of DNA into RNA using the four ribonucleoside triphosphates as substrates. In Glaesserella parasuis serovar 5 (strain SH0165) (Haemophilus parasuis), this protein is DNA-directed RNA polymerase subunit beta.